The primary structure comprises 106 residues: uncharacterized protein (106 aa).

The segment at 38-106 (KGNKKSKAAT…STHLPYHGSY (69 aa)) is disordered. Basic and acidic residues-rich tracts occupy residues 57–71 (TRQE…HRPE) and 82–96 (WKKE…KETS).

It is found in the mitochondrion. This is an uncharacterized protein from Arabidopsis thaliana (Mouse-ear cress).